Reading from the N-terminus, the 415-residue chain is Gamma-glutamyl phosphate reductase (415 aa).

Belongs to the gamma-glutamyl phosphate reductase family.

The protein localises to the cytoplasm. The catalysed reaction is L-glutamate 5-semialdehyde + phosphate + NADP(+) = L-glutamyl 5-phosphate + NADPH + H(+). Its pathway is amino-acid biosynthesis; L-proline biosynthesis; L-glutamate 5-semialdehyde from L-glutamate: step 2/2. Its function is as follows. Catalyzes the NADPH-dependent reduction of L-glutamate 5-phosphate into L-glutamate 5-semialdehyde and phosphate. The product spontaneously undergoes cyclization to form 1-pyrroline-5-carboxylate. The sequence is that of Gamma-glutamyl phosphate reductase from Listeria innocua serovar 6a (strain ATCC BAA-680 / CLIP 11262).